The chain runs to 196 residues: ATP-dependent Clp protease proteolytic subunit (196 aa).

The active-site Nucleophile is serine 101. The active site involves histidine 126.

This sequence belongs to the peptidase S14 family. As to quaternary structure, component of the chloroplastic Clp protease core complex.

It localises to the plastid. It is found in the chloroplast stroma. It catalyses the reaction Hydrolysis of proteins to small peptides in the presence of ATP and magnesium. alpha-casein is the usual test substrate. In the absence of ATP, only oligopeptides shorter than five residues are hydrolyzed (such as succinyl-Leu-Tyr-|-NHMec, and Leu-Tyr-Leu-|-Tyr-Trp, in which cleavage of the -Tyr-|-Leu- and -Tyr-|-Trp bonds also occurs).. Its function is as follows. Cleaves peptides in various proteins in a process that requires ATP hydrolysis. Has a chymotrypsin-like activity. Plays a major role in the degradation of misfolded proteins. In Spinacia oleracea (Spinach), this protein is ATP-dependent Clp protease proteolytic subunit.